The chain runs to 146 residues: Ribonuclease H (146 aa).

An RNase H type-1 domain is found at 1 to 143 (MKEIIIYTDG…CDQLARNAIK (143 aa)). 4 residues coordinate Mg(2+): Asp9, Glu47, Asp70, and Asp135.

Belongs to the RNase H family. In terms of assembly, monomer. Mg(2+) serves as cofactor.

It localises to the cytoplasm. It catalyses the reaction Endonucleolytic cleavage to 5'-phosphomonoester.. Its function is as follows. Endonuclease that specifically degrades the RNA of RNA-DNA hybrids. The sequence is that of Ribonuclease H from Syntrophomonas wolfei subsp. wolfei (strain DSM 2245B / Goettingen).